A 2472-amino-acid polypeptide reads, in one-letter code: Spectrin alpha chain, non-erythrocytic 1 (2472 aa).

An N-acetylmethionine modification is found at methionine 1. Spectrin repeat units lie at residues 45-146, 150-251, 256-358, 361-465, 468-570, 574-676, 679-781, 785-888, and 891-961; these read RFQF…IKLL, KLVQ…QGKL, EVQR…ARLD, YRLQ…QYEQ, DLQL…AQLA, HLQQ…KLRE, QQQQ…QKLA, RLQQ…DLED, and QAQQ…QQVA. Serine 587 is modified (phosphoserine). N6-acetyllysine is present on lysine 637. Lysine 803 is modified (N6-acetyllysine). Serine 924, serine 982, serine 999, serine 1029, serine 1031, and serine 1041 each carry phosphoserine. Residues 967–1026 enclose the SH3 domain; that stretch reads TGKELVLALYDYQEKSPREVTMKKGDILTLLNSTNKDWWKVEVNDRQGFVPAAYVKKLDP. Residues 1096 to 1166 form a Spectrin 10 repeat; it reads LFREANELQQ…LESEGLMAEE (71 aa). Position 1176 is a phosphotyrosine (tyrosine 1176). Phosphoserine occurs at positions 1190, 1207, 1217, 1291, 1306, 1323, and 1338. A Spectrin 11 repeat occupies 1233–1336; it reads HEVQRFHRDA…RADQRKAKLG (104 aa). Spectrin repeat units lie at residues 1339-1441 and 1446-1549; these read HDLQ…RMML and ELQL…KLGE. An N6-acetyllysine modification is found at lysine 1519. Phosphoserine occurs at positions 1550, 1557, 1578, 1615, and 1647. Spectrin repeat units lie at residues 1552–1656, 1659–1762, 1764–1868, 1871–1974, 1978–2081, 2092–2194, and 2206–2310; these read TLQQ…KLKE, KQQN…KLSE, HRLH…RLEE, EYQQ…KLDE, FLQF…KLLE, LFLT…LELQ, and LRQE…NLEQ. Threonine 2020 is modified (phosphothreonine). Lysine 2052 is modified (N6-acetyllysine). The residue at position 2066 (threonine 2066) is a Phosphothreonine. EF-hand domains are found at residues 2323-2358, 2366-2401, and 2404-2439; these read EALK…LGYD, EPDP…RETE, and KSSE…EQAD. 10 residues coordinate Ca(2+): aspartate 2336, aspartate 2338, serine 2340, arginine 2342, glutamate 2347, aspartate 2379, asparagine 2381, aspartate 2383, histidine 2385, and glutamate 2390. At lysine 2421 the chain carries N6-acetyllysine.

The protein belongs to the spectrin family. As to quaternary structure, like erythrocyte spectrin, the spectrin-like proteins are capable of forming dimers which can further associate to tetramers. Interacts (via C-terminal spectrin repeats) with TRPC4. Interacts with CALM and EMD. Interacts with isoform 1 of ACP1. Identified in a complex with ACTN4, CASK, IQGAP1, MAGI2, NPHS1 and SPTBN1. Interacts with SHANK3 (via ANK repeats). Interacts with CLN3; this interaction regulates the fodrin localization at the plasma membrane. Phosphorylation of Tyr-1176 decreases sensitivity to cleavage by calpain in vitro. As to expression, expressed in the foot process layer of podocytes in the kidney glomerulus and in tubules (at protein level).

Its subcellular location is the cytoplasm. The protein resides in the cytoskeleton. It localises to the cell cortex. Functionally, fodrin, which seems to be involved in secretion, interacts with calmodulin in a calcium-dependent manner and is thus candidate for the calcium-dependent movement of the cytoskeleton at the membrane. The protein is Spectrin alpha chain, non-erythrocytic 1 (Sptan1) of Rattus norvegicus (Rat).